A 221-amino-acid chain; its full sequence is Histone H1.3 (221 aa).

Low complexity predominate over residues 1–17 (MSETAPLAPTIPAPAEK). The interval 1–43 (MSETAPLAPTIPAPAEKTPVKKKAKKAGATAGKRKASGPPVSE) is disordered. N-acetylserine is present on S2. S2 is subject to Phosphoserine. An N6-acetyllysine modification is found at K17. Residue T18 is modified to Phosphothreonine. Residues 20-36 (VKKKAKKAGATAGKRKA) show a composition bias toward basic residues. N6-(beta-hydroxybutyryl)lysine is present on residues K35, K47, and K53. An H15 domain is found at 37 to 110 (SGPPVSELIT…GASGSFKLNK (74 aa)). R55 bears the Citrulline mark. An N6-(beta-hydroxybutyryl)lysine mark is found at K65, K76, K86, and K91. The interval 90-221 (SKGTLVQTKG…KAKKAAPKKK (132 aa)) is disordered. Position 105 is a phosphoserine; by PKC (S105). Residue K107 is modified to N6-(beta-hydroxybutyryl)lysine. Basic residues-rich tracts occupy residues 120–141 (KAKK…KPKK), 150–161 (KSIKKTPKKVKK), and 170–179 (KVAKSAKKVK). K170 is subject to N6-(beta-hydroxybutyryl)lysine. Positions 180-193 (TPQPKKAAKSPAKA) are enriched in low complexity. Residues 194 to 221 (KAPKPKAAKPKSGKPKVTKAKKAAPKKK) are compositionally biased toward basic residues.

It belongs to the histone H1/H5 family. Post-translationally, H1 histones are progressively phosphorylated during the cell cycle, becoming maximally phosphorylated during late G2 phase and M phase, and being dephosphorylated sharply thereafter. Citrullination at Arg-55 (H1R54ci) by PADI4 takes place within the DNA-binding site of H1 and results in its displacement from chromatin and global chromatin decondensation, thereby promoting pluripotency and stem cell maintenance.

It is found in the nucleus. The protein localises to the chromosome. Functionally, histone H1 protein binds to linker DNA between nucleosomes forming the macromolecular structure known as the chromatin fiber. Histones H1 are necessary for the condensation of nucleosome chains into higher-order structured fibers. Also acts as a regulator of individual gene transcription through chromatin remodeling, nucleosome spacing and DNA methylation. This Homo sapiens (Human) protein is Histone H1.3.